The sequence spans 288 residues: 11-beta-hydroxysteroid dehydrogenase 1 (288 aa).

Topologically, residues 1 to 4 (MKKY) are cytoplasmic. A helical; Signal-anchor for type II membrane protein membrane pass occupies residues 5–20 (LLPVLVLCLGYYYSTN). Topologically, residues 21–288 (EEFRPEMLQG…SYNRDLFVSN (268 aa)) are lumenal. Residues 37–63 (GASKGIGREMAYHLSKMGAHVVLTARS), 88–89 (TM), and 115–117 (NHI) contribute to the NADP(+) site. Residue Asn158 is glycosylated (N-linked (GlcNAc...) asparagine). Ser166 provides a ligand contact to substrate. Tyr179 (proton acceptor) is an active-site residue. 179–183 (YSASK) lines the NADP(+) pocket. N-linked (GlcNAc...) asparagine glycosylation occurs at Asn203. Residues 212-218 (GFIDTET) and 214-218 (IDTET) contribute to the NADP(+) site.

This sequence belongs to the short-chain dehydrogenases/reductases (SDR) family. In terms of assembly, homodimer. Post-translationally, glycosylated. As to expression, liver, kidney, lung and testis. Brain. Expressed in liver (at protein level).

Its subcellular location is the endoplasmic reticulum membrane. It catalyses the reaction an 11beta-hydroxysteroid + NADP(+) = an 11-oxosteroid + NADPH + H(+). It carries out the reaction corticosterone + NADP(+) = 11-dehydrocorticosterone + NADPH + H(+). The enzyme catalyses a 7beta-hydroxysteroid + NADP(+) = a 7-oxosteroid + NADPH + H(+). The catalysed reaction is 7-oxocholesterol + NADPH + H(+) = 7beta-hydroxycholesterol + NADP(+). It catalyses the reaction chenodeoxycholate + NADP(+) = 7-oxolithocholate + NADPH + H(+). It carries out the reaction 7-oxolithocholate + NADPH + H(+) = ursodeoxycholate + NADP(+). The enzyme catalyses glycochenodeoxycholate + NADP(+) = 7-oxoglycolithocholate + NADPH + H(+). The catalysed reaction is taurochenodeoxycholate + NADP(+) = 7-oxotaurolithocholate + NADPH + H(+). It catalyses the reaction tauroursodeoxycholate + NADP(+) = 7-oxotaurolithocholate + NADPH + H(+). It carries out the reaction glycoursodeoxycholate + NADP(+) = 7-oxoglycolithocholate + NADPH + H(+). The enzyme catalyses 7-oxopregnenolone + NADPH + H(+) = 7beta-hydroxypregnenolone + NADP(+). The catalysed reaction is 3beta,7alpha-dihydroxyandrost-5-en-17-one + NADP(+) = 3beta-hydroxy-5-androstene-7,17-dione + NADPH + H(+). It catalyses the reaction 3beta-hydroxy-5-androstene-7,17-dione + NADPH + H(+) = 3beta,7beta-dihydroxyandrost-5-en-17-one + NADP(+). It carries out the reaction 3beta-hydroxy-5alpha-androstane-7,17-dione + NADPH + H(+) = 3beta,7beta-dihydroxy-5alpha-androstan-17-one + NADP(+). In terms of biological role, controls the reversible conversion of biologically active glucocorticoids such as 11-dehydrocorticosterone to corticosterone using NADP(H). Participates in the corticosteroid receptor-mediated anti-inflammatory response, as well as metabolic and homeostatic processes. Bidirectional in vitro, predominantly functions as a reductase in vivo, thereby increasing the concentration of active glucocorticoids. It has broad substrate specificity, besides glucocorticoids, it accepts other steroid and sterol substrates. Interconverts 7-oxo- and 7-hydroxy-neurosteroids such as 7-oxopregnenolone and 7beta-hydroxypregnenolone, 7-oxodehydroepiandrosterone (3beta-hydroxy-5-androstene-7,17-dione) and 7beta-hydroxydehydroepiandrosterone (3beta,7beta-dihydroxyandrost-5-en-17-one), among others. Catalyzes the stereo-specific conversion of the major dietary oxysterol, 7-ketocholesterol (7-oxocholesterol), into the more polar 7-beta-hydroxycholesterol metabolite. 7-oxocholesterol is one of the most important oxysterols, it participates in several events such as induction of apoptosis, accumulation in atherosclerotic lesions, lipid peroxidation, and induction of foam cell formation. Mediates the 7-oxo reduction of 7-oxolithocholate mainly to chenodeoxycholate, and to a lesser extent to ursodeoxycholate, both in its free form and when conjugated to glycine or taurine, providing a link between glucocorticoid activation and bile acid metabolism. Catalyzes the synthesis of 7-beta-25-dihydroxycholesterol from 7-oxo-25-hydroxycholesterol in vitro, which acts as a ligand for the G-protein-coupled receptor (GPCR) Epstein-Barr virus-induced gene 2 (EBI2) and may thereby regulate immune cell migration. In Rattus norvegicus (Rat), this protein is 11-beta-hydroxysteroid dehydrogenase 1.